Reading from the N-terminus, the 417-residue chain is CinA-like protein (417 aa).

This sequence belongs to the CinA family.

The sequence is that of CinA-like protein from Leptospira biflexa serovar Patoc (strain Patoc 1 / Ames).